The following is a 113-amino-acid chain: Large ribosomal subunit protein uL22 (113 aa).

It belongs to the universal ribosomal protein uL22 family. Part of the 50S ribosomal subunit.

In terms of biological role, this protein binds specifically to 23S rRNA; its binding is stimulated by other ribosomal proteins, e.g. L4, L17, and L20. It is important during the early stages of 50S assembly. It makes multiple contacts with different domains of the 23S rRNA in the assembled 50S subunit and ribosome. Its function is as follows. The globular domain of the protein is located near the polypeptide exit tunnel on the outside of the subunit, while an extended beta-hairpin is found that lines the wall of the exit tunnel in the center of the 70S ribosome. The protein is Large ribosomal subunit protein uL22 of Anoxybacillus flavithermus (strain DSM 21510 / WK1).